A 504-amino-acid polypeptide reads, in one-letter code: Procardosin-A (504 aa).

The N-terminal stretch at 1 to 24 (MGTSIKANVLALFLFYLLSPTVFS) is a signal peptide. Positions 25-68 (VSDDGLIRIGLKKRKVDRIDQLRGRRALMEGNARKDFGFRGTVR) are excised as a propeptide. A Peptidase A1 domain is found at 85-501 (YFGEIGIGTP…DYGNLLVGFA (417 aa)). The active site involves aspartate 103. An intrachain disulfide couples cysteine 116 to cysteine 122. Residue asparagine 139 is glycosylated (N-linked (GlcNAc...) asparagine). The short motif at 246-248 (RGD) is the RGD motif element. Cysteine 277 and cysteine 281 are oxidised to a cystine. The active site involves aspartate 286. A propeptide spans 310-414 (GVMNQQCKTV…YANELCEHLS (105 aa)) (plant-specific insert). Residues 311–416 (VMNQQCKTVV…NELCEHLSTS (106 aa)) enclose the Saposin B-type domain. 4 disulfide bridges follow: cysteine 316/cysteine 410, cysteine 341/cysteine 382, cysteine 347/cysteine 379, and cysteine 424/cysteine 461. Asparagine 432 carries an N-linked (GlcNAc...) asparagine glycan. A KGE motif motif is present at residues 455–457 (KGE).

The protein belongs to the peptidase A1 family. In terms of assembly, heterodimer of a light chain and a heavy chain. An intermediate form (35 kDa and 30 kDa subunits) is produced first, and undergoes proteolytic processing to remove the internal plant-specific insert (PSI) and the propeptide. There is some heterogeniety at the cleavage site. Interacts (via RGD or KGE motifs) with PLD1 (via C2 domain). Post-translationally, N-glycosylated. Glycans found at Asn-139 include approximately 6% oligomannose, 82% oligosaccharides of the plant modified type with proximal fucose but without xylose and 6% oligosaccharides of the plant modified type with proximal fucose and xylose. Glycans found at Asn-432 include 14% oligosaccharides of the plant modified type with proximal fucose but without xylose and 86% oligosaccharides of the plant modified type with proximal fucose and xylose. As to expression, detected only in pistils, not in seeds, roots, midribs, bracts, stamens, pollen, vascular or supporting tissues. Detected in seeds. High amounts are detected in the broad outer region of the upper portion of the stigma, towards the lower portion of the stigma it accumulates at the periphery. Within the stigma, expressed mainly in the epidermic papillae, lower levels are found in the cortical parenchyma. Present mainly in epidermal cells within the stye (at protein level). Expressed in young flower buds, and at lower levels in seeds, pollen and bracteas, but not in roots or leaves.

It is found in the microsome membrane. The protein localises to the protein storage vacuole. The protein resides in the secreted. Its subcellular location is the cell wall. It localises to the extracellular space. It is found in the extracellular matrix. Its activity is regulated as follows. Inhibited by the specific aspartic proteinase inhibitors diazoacetyl-noleucine methyl ester and pepstatin. Its function is as follows. Aspartic proteinase with a high preference for bonds between hydrophobic residues. Cleaves alpha-lactalbumin but not beta-lactoglobulin. The sequence is that of Procardosin-A from Cynara cardunculus (Cardoon).